Here is a 385-residue protein sequence, read N- to C-terminus: 8-amino-7-oxononanoate synthase (385 aa).

Residue arginine 27 coordinates substrate. 105–106 provides a ligand contact to pyridoxal 5'-phosphate; the sequence is GY. Position 130 (histidine 130) interacts with substrate. Pyridoxal 5'-phosphate contacts are provided by residues serine 176, 201–204, and 232–235; these read DEAH and TMSK. At lysine 235 the chain carries N6-(pyridoxal phosphate)lysine. Position 345 (threonine 345) interacts with substrate.

It belongs to the class-II pyridoxal-phosphate-dependent aminotransferase family. BioF subfamily. Homodimer. The cofactor is pyridoxal 5'-phosphate.

The enzyme catalyses 6-carboxyhexanoyl-[ACP] + L-alanine + H(+) = (8S)-8-amino-7-oxononanoate + holo-[ACP] + CO2. It participates in cofactor biosynthesis; biotin biosynthesis. In terms of biological role, catalyzes the decarboxylative condensation of pimeloyl-[acyl-carrier protein] and L-alanine to produce 8-amino-7-oxononanoate (AON), [acyl-carrier protein], and carbon dioxide. The polypeptide is 8-amino-7-oxononanoate synthase (Mycobacterium leprae (strain Br4923)).